A 552-amino-acid chain; its full sequence is Beta-hexosaminidase A (552 aa).

The first 15 residues, 1–15 (MRLIVLSLLFTSTLA), serve as a signal peptide directing secretion. An N-linked (GlcNAc...) asparagine glycan is attached at asparagine 44. Glutamate 322 (proton donor) is an active-site residue. N-linked (GlcNAc...) asparagine glycans are attached at residues asparagine 348, asparagine 409, and asparagine 457.

Belongs to the glycosyl hydrolase 20 family.

It is found in the lysosome. It catalyses the reaction Hydrolysis of terminal non-reducing N-acetyl-D-hexosamine residues in N-acetyl-beta-D-hexosaminides.. Responsible for the degradation of GM2 gangliosides, and a variety of other molecules containing terminal N-acetyl hexosamines. Degrades chitotriose. This chain is Beta-hexosaminidase A, found in Caenorhabditis briggsae.